The sequence spans 694 residues: Probable methyltransferase PMT11 (694 aa).

Residues 1 to 14 (MKPLTNGDLFKSPT) are Cytoplasmic-facing. Residues 15 to 32 (LIKISALVFVTVAFFYLG) form a helical; Signal-anchor for type II membrane protein membrane-spanning segment. Residues 33 to 694 (KHWSDDGYQQ…LTCEKRLLRA (662 aa)) are Lumenal-facing. N-linked (GlcNAc...) asparagine glycans are attached at residues Asn-69 and Asn-77. The tract at residues 83–128 (IPATIRQQPPSVVADTEKVKVEANPPPPPPPSPSPPPPPGPVKSFG) is disordered. Over residues 106-123 (NPPPPPPPSPSPPPPPGP) the composition is skewed to pro residues. Residues Asn-155, Asn-378, and Asn-423 are each glycosylated (N-linked (GlcNAc...) asparagine).

It belongs to the methyltransferase superfamily.

It is found in the golgi apparatus membrane. The polypeptide is Probable methyltransferase PMT11 (Arabidopsis thaliana (Mouse-ear cress)).